A 175-amino-acid chain; its full sequence is Protein LHCP TRANSLOCATION DEFECT (175 aa).

The transit peptide at 1 to 68 directs the protein to the chloroplast; the sequence is MASSSISFSC…WFKFGKNGVD (68 aa). Residues 117–149 form an ANK repeat; it reads PVDILLMLAATEGDRPKIEELLKAGADYSVKDA.

As to quaternary structure, interacts with CAO/cpSRP43, but is not a component of the transit complex. Interacts with LHCP (via T14 domain), TIC40 and TIC110. Highly expressed in leaves and seedlings. Detected in roots, but not in germinating seeds.

The protein resides in the plastid. Its subcellular location is the chloroplast thylakoid membrane. The protein localises to the chloroplast envelope. It localises to the chloroplast stroma. Involved in the import of light-harvesting complex proteins (LHCP) and subsequent routing of these proteins to the chloroplast signal recognition particle (SRP) pathway. In Arabidopsis thaliana (Mouse-ear cress), this protein is Protein LHCP TRANSLOCATION DEFECT (LTD).